Here is a 628-residue protein sequence, read N- to C-terminus: Very-long-chain aldehyde decarbonylase GL1-2 (628 aa).

5 consecutive transmembrane segments (helical) span residues 37–57, 131–151, 191–211, 299–319, and 331–351; these read GAAP…ARGL, GWAI…YWAH, VVIG…VGLV, DFVF…PFVL, and FVLL…WCCS. The 141-residue stretch at 137–277 folds into the Fatty acid hydroxylase domain; sequence LLHVLVAEPL…MPIFDLLGGT (141 aa).

It belongs to the sterol desaturase family. Homodimer. In terms of tissue distribution, expressed in germinating seeds, radicals and leaves.

It localises to the endoplasmic reticulum membrane. It carries out the reaction a long-chain fatty aldehyde + 2 NADPH + O2 + H(+) = a long-chain alkane + formate + 2 NADP(+) + H2O. Its function is as follows. Aldehyde decarbonylase involved in the conversion of aldehydes to alkanes. Core component of a very-long-chain alkane synthesis complex. Required for the formation of wax layers conferring cuticular permeability and drought tolerance. The chain is Very-long-chain aldehyde decarbonylase GL1-2 from Oryza sativa subsp. japonica (Rice).